A 553-amino-acid chain; its full sequence is Salicylyl-CoA synthase / salicylate adenylyltransferase (553 aa).

Glycine 203 serves as a coordination point for ATP. 246–247 (HN) serves as a coordination point for substrate. The ATP site is built by glycine 320, valine 342, aspartate 426, arginine 441, and lysine 533. Substrate is bound at residue lysine 533.

The protein belongs to the ATP-dependent AMP-binding enzyme family.

The enzyme catalyses salicylate + ATP + CoA = 2-hydroxybenzoyl-CoA + AMP + diphosphate. Functionally, involved in the degradation of salicylate via a pathway involving coenzyme A derivative. Catalyzes the conversion of salicylate to salicyloyl-CoA via the formation of a salicylate-adenylate intermediate. The substrate specificity is strong, since benzoate, 3-hydroxybenzoate, 4-hydroxybenzoate, gentisate, 2-aminobenzoate, aminobenzoate, salicylamide, salicylaldoxime and 2-hydroxyphenyl acetate cannot substitute for salicylate. The protein is Salicylyl-CoA synthase / salicylate adenylyltransferase of Streptomyces sp.